Consider the following 108-residue polypeptide: Small proline-rich protein 5 (108 aa).

Low complexity predominate over residues 1-13; that stretch reads MSQQKQKQCAPPQ. Disordered regions lie at residues 1–24 and 73–108; these read MSQQ…QRCP and PPPQ…SKQK. 2 stretches are compositionally biased toward pro residues: residues 14–24 and 73–100; these read QCCPPPQQRCP and PPPQ…PPPQ.

In terms of biological role, positively regulates keratinocyte differentiation by inducing genes associated with epidermal differentiation. This is Small proline-rich protein 5 from Homo sapiens (Human).